Here is a 574-residue protein sequence, read N- to C-terminus: Proline--tRNA ligase (574 aa).

Belongs to the class-II aminoacyl-tRNA synthetase family. ProS type 1 subfamily. As to quaternary structure, homodimer.

Its subcellular location is the cytoplasm. The enzyme catalyses tRNA(Pro) + L-proline + ATP = L-prolyl-tRNA(Pro) + AMP + diphosphate. Its function is as follows. Catalyzes the attachment of proline to tRNA(Pro) in a two-step reaction: proline is first activated by ATP to form Pro-AMP and then transferred to the acceptor end of tRNA(Pro). As ProRS can inadvertently accommodate and process non-cognate amino acids such as alanine and cysteine, to avoid such errors it has two additional distinct editing activities against alanine. One activity is designated as 'pretransfer' editing and involves the tRNA(Pro)-independent hydrolysis of activated Ala-AMP. The other activity is designated 'posttransfer' editing and involves deacylation of mischarged Ala-tRNA(Pro). The misacylated Cys-tRNA(Pro) is not edited by ProRS. The polypeptide is Proline--tRNA ligase (Ralstonia pickettii (strain 12J)).